The primary structure comprises 57 residues: Large ribosomal subunit protein bL32B (57 aa).

Belongs to the bacterial ribosomal protein bL32 family.

This is Large ribosomal subunit protein bL32B (rpmF2) from Listeria innocua serovar 6a (strain ATCC BAA-680 / CLIP 11262).